The chain runs to 877 residues: G-protein coupled receptor family C group 6 member A (877 aa).

The signal sequence occupies residues 1-24 (MAGLDLSLVLMLSVLAGVREVSLT). Over 25-567 (QVNQQGVIAP…EYFEWNSGFA (543 aa)) the chain is Extracellular. N-linked (GlcNAc...) asparagine glycans are attached at residues N53, N99, N135, N263, N310, N322, N338, and N358. D388 is a binding site for L-lysine. N-linked (GlcNAc...) asparagine glycosylation is found at N430, N475, N484, N528, and N548. Residues 568–588 (IALLTLAALGILLLISMSALF) form a helical membrane-spanning segment. Topologically, residues 589–603 (FWQRNSLVVKAAGGP) are cytoplasmic. A helical membrane pass occupies residues 604-624 (LCHLILFSLLGSFISVIFFVG). The Extracellular segment spans residues 625 to 635 (EPSNESCRVRQ). Residue N628 is glycosylated (N-linked (GlcNAc...) asparagine). Residues 636 to 656 (VIFGLSFTLCVSCILVKSLKI) traverse the membrane as a helical segment. The Cytoplasmic segment spans residues 657–676 (LLAFQMNLELKELLRKLYKP). A helical membrane pass occupies residues 677–697 (YVIVCMCMGLQVTICTLWLTL). The Extracellular portion of the chain corresponds to 698 to 720 (HRPFIEKVVQPKSILLECNEGSD). A helical membrane pass occupies residues 721-741 (LMFGLMLGYIVLLALICFTFA). Residues 742 to 755 (YKGRKLPQKYNEAK) are Cytoplasmic-facing. Residues 756–776 (FITFGMLIYLMAWVIFIPVHV) form a helical membrane-spanning segment. The Extracellular portion of the chain corresponds to 777–782 (TTSGKY). The helical transmembrane segment at 783–803 (VPAVEVVVILISNYGILSCHF) threads the bilayer. At 804 to 877 (LPKCYIIIFK…VSVPEIDNVL (74 aa)) the chain is on the cytoplasmic side.

This sequence belongs to the G-protein coupled receptor 3 family. In terms of assembly, homodimer; disulfide-linked. In terms of tissue distribution, expressed in olfactory epithelium. Also expressed in gills, tongue, lips and palatal organ. Not expressed in brain, kidney, liver, muscle, intestine, ovary and skin. In olfactory epithelium, it is widely expressed over the apical and medial portions of the olfactory sensory neurons, regions that contain olfactory neurons. Expressed in external epithelia, which contains taste buds and solitary chemosensory cells. On gill rakers, it is widely expressed in the surface epithelium, but excluded from taste buds.

The protein localises to the cell membrane. Its function is as follows. Olfactory receptor that is activated by amino acids that act as potent odorants in fish. Most highly activated by basic amino acids such as L-lysine and L-arginine. In Carassius auratus (Goldfish), this protein is G-protein coupled receptor family C group 6 member A (gprc6a).